We begin with the raw amino-acid sequence, 398 residues long: 1-deoxy-D-xylulose 5-phosphate reductoisomerase (398 aa).

8 residues coordinate NADPH: T10, G11, S12, I13, G36, K37, N38, and N124. K125 contributes to the 1-deoxy-D-xylulose 5-phosphate binding site. An NADPH-binding site is contributed by E126. D150 is a Mn(2+) binding site. 4 residues coordinate 1-deoxy-D-xylulose 5-phosphate: S151, E152, S186, and H209. Residue E152 participates in Mn(2+) binding. NADPH is bound at residue G215. Residues S222, N227, K228, and E231 each coordinate 1-deoxy-D-xylulose 5-phosphate. E231 serves as a coordination point for Mn(2+).

Belongs to the DXR family. As to quaternary structure, homodimer. Requires Mg(2+) as cofactor. Mn(2+) is required as a cofactor.

It catalyses the reaction 2-C-methyl-D-erythritol 4-phosphate + NADP(+) = 1-deoxy-D-xylulose 5-phosphate + NADPH + H(+). The protein operates within isoprenoid biosynthesis; isopentenyl diphosphate biosynthesis via DXP pathway; isopentenyl diphosphate from 1-deoxy-D-xylulose 5-phosphate: step 1/6. Functionally, catalyzes the NADPH-dependent rearrangement and reduction of 1-deoxy-D-xylulose-5-phosphate (DXP) to 2-C-methyl-D-erythritol 4-phosphate (MEP). In Salmonella paratyphi A (strain ATCC 9150 / SARB42), this protein is 1-deoxy-D-xylulose 5-phosphate reductoisomerase.